The chain runs to 366 residues: RISC-loading complex subunit TARBP2 (366 aa).

Sufficient for interaction with PRKRA stretches follow at residues 22 to 105 (MLAA…EPAL), 152 to 234 (SPQQ…DARD), and 287 to 366 (LGAL…AGSK). A DRBM 1 domain is found at 30–97 (TPISLLQEYG…AEVALKHLKG (68 aa)). Residues 135 to 158 (PSAVPTRSSPMEVQPPVSPQQSEC) form a disordered region. Ser152 is subject to Phosphoserine. 2 consecutive DRBM domains span residues 159–227 (NPVG…RVHT) and 293–361 (ACCS…YLKI). The tract at residues 228-366 (VPLDARDGNE…QYLKIMAGSK (139 aa)) is sufficient for interaction with DICER1.

It belongs to the TARBP2 family. In terms of assembly, self-associates. Component of the RISC loading complex (RLC), or micro-RNA (miRNA) loading complex (miRLC), which is composed of DICER1, AGO2 and TARBP2. Note that the trimeric RLC/miRLC is also referred to as RISC. Interacts with EIF2AK2/PKR and inhibits its protein kinase activity. Interacts with DHX9 and PRKRA. Interacts with DICER1, AGO2, MOV10, EIF6 and RPL7A (60S ribosome subunit); they form a large RNA-induced silencing complex (RISC). Interacts with IRF7; this interaction prevents IRF7 phosphorylation and activation.

Its subcellular location is the cytoplasm. The protein resides in the perinuclear region. It is found in the nucleus. Functionally, required for formation of the RNA induced silencing complex (RISC). Component of the RISC loading complex (RLC), also known as the micro-RNA (miRNA) loading complex (miRLC), which is composed of DICER1, AGO2 and TARBP2. Within the RLC/miRLC, DICER1 and TARBP2 are required to process precursor miRNAs (pre-miRNAs) to mature miRNAs and then load them onto AGO2. AGO2 bound to the mature miRNA constitutes the minimal RISC and may subsequently dissociate from DICER1 and TARBP2. May also play a role in the production of short interfering RNAs (siRNAs) from double-stranded RNA (dsRNA) by DICER1. Binds in vitro to the PRM1 3'-UTR. Seems to act as a repressor of translation. For some pre-miRNA substrates, may also alter the choice of cleavage site by DICER1. Negatively regulates IRF7-mediated IFN-beta signaling triggered by viral infection by inhibiting the phosphorylation of IRF7 and promoting its 'Lys'-48-linked ubiquitination and degradation. The chain is RISC-loading complex subunit TARBP2 from Bos taurus (Bovine).